Here is a 1115-residue protein sequence, read N- to C-terminus: Integrin alpha-PS3 (1115 aa).

The first 24 residues, 1–24, serve as a signal peptide directing secretion; the sequence is MNAESTMFPHIFLALLALISHIEA. Residues 25–1054 are Extracellular-facing; the sequence is FNFMPRPSRV…PNIISKHQET (1030 aa). FG-GAP repeat units lie at residues 39–99, 113–174, 193–246, 278–335, 336–397, 398–453, and 460–522; these read KHLK…VCSP, SEYT…STPQ, DNGN…VDNP, IPTP…GKSI, HKYH…FNFE, RQIL…GLRD, and DAPS…SESR. Asn-46, Asn-82, and Asn-166 each carry an N-linked (GlcNAc...) asparagine glycan. N-linked (GlcNAc...) asparagine glycosylation is present at Asn-438. 4 N-linked (GlcNAc...) asparagine glycosylation sites follow: Asn-696, Asn-845, Asn-868, and Asn-964. Residues 1055–1075 form a helical membrane-spanning segment; the sequence is GLPIWIIIVSVIGGLLLLSAI. At 1076 to 1115 the chain is on the cytoplasmic side; sequence SYLLYKFGFFNRTKKDELDRLVQQNPVEPEAENLNSGGNN.

It belongs to the integrin alpha chain family. Heterodimer of an alpha and a beta subunit. The alpha subunit is composed of a heavy and a light chain linked by a disulfide bond. Interacts with mys/beta-PS and Itgbn. As to expression, expressed in embryonic and larval hemocytes (at protein level). Expressed in tissues undergoing invagination, tissue movement and morphogenesis such as salivary gland, trachea, midgut endoderm, dorsal vessel, midline of the ventral nerve cord, amnioserosa and the amnioproctodeal invagination. Expressed in the mushroom body neuropil, brain areas that contain mushroom body processes in synaptic contact with other neurons. In egg chambers, expressed in border cells, in stretch cells and in dorsal appendage primordia.

The protein resides in the apical cell membrane. It is found in the lateral cell membrane. It localises to the cytoplasm. Functionally, integrin alpha-PS3/beta-PS is a receptor for laminin. Also binds to wb. Important during embryogenesis for the development of the trachea, dorsal vessel and salivary gland, as well as for dorsal closure. Required for short-term memory processes. Minor involvement in the establishment of the oocyte anterior-posterior length. Plays a role in timely border cell migration during oogenesis, probably mediated by JNK signaling. Integrin alpha-PS3/Itgbn is required for effective phagocytosis of apoptotic cells during embryonic development and for the phagocytic elimination of S.aureus by mediating the binding of S.aureus peptidoglycan to larval hemocytes, which probably activates a signaling pathway involving Rac1 and Rac2. Integrin alpha-PS3/Itgbn also regulates Fak activity during neuromuscular junction (NMJ) growth and is required for its activation in presynapsis of NMJs. Seems to be dispensable for major morphogenetic processes. This Drosophila melanogaster (Fruit fly) protein is Integrin alpha-PS3 (scb).